Here is an 836-residue protein sequence, read N- to C-terminus: MFWIAKTLIAFLILLKTDCYKIAIPANLIDEVNPVLEFVDFRVQVIPYETKPLWRIKQESFKIVGISIENGLFSVCNCLILGASAIILPEQYDGHLAAAAIVQSIADNTNVPCVSLHLSPPTRPSTHLHPHLNAKSLAVAAFIKREKWKDVVVVFEEPDELLEITDMITAGHFDPDSFSSQLVRLKHGDDYGNELKHIKNKLDRYRIVINIPLQKALHFLEQAANMSMCGVLYHYVVMDMDLVTVDIDSIRGIEDCNITSFGVHDVNSEYIEDIRQEIVHKSSIRLPKKGVPYTTSIWIDTLRLLIRSMKSIQIWDEPRCGSSWKSGSDIKKRFFENPLAGISGDLHWAPSGERSNYTLHVYRRTLSFQKFAEWSSRTRRIASSEAVVIANSSEKLTLEGKHLKISVYLEAPFVMITSNGSYEGYCIDLLHKIANILKFTYTIQKVRDNAYGSKESNGKWSGMVGELQRGDADLAVASLTISYGRSEVIDFTVPYMHLGISILFKKPRIRDSDWFKFMDPLSTQVWIMTFASYFVVSVAIWIIAKISPYEQFERDEDNGQYKPVDNQFSLRNSFWFTVCSLMQQGSELCPRAASTRLLTGIWWFFALILISSYTANLAAVLTTRRMETPIENADDLAAQTKIKYGTLGRGSTMSFFNESKIETYERMWQLMSSSPGLFVQSSKEGIARVKSSDYAYLMESSMLEYAVERDCELMQIGGLIDQKGYGIGLPKGSPYRELISTAILRLQEKTELTELKEKWWKDKSVVCEQPKRKDQDDGESIGGIFIILVVGLVLTAVLVIFELITTRKPSPAQSQVIRHVNVIPSFKLGFFRWNVN.

Positions 1–19 are cleaved as a signal peptide; it reads MFWIAKTLIAFLILLKTDC. Residues 20-523 lie on the Extracellular side of the membrane; sequence YKIAIPANLI…WFKFMDPLST (504 aa). An intrachain disulfide couples Cys-76 to Cys-320. 5 N-linked (GlcNAc...) asparagine glycosylation sites follow: Asn-225, Asn-257, Asn-356, Asn-391, and Asn-419. Residues 478-480 and Arg-485 each bind L-glutamate; that span reads SLT. The helical transmembrane segment at 524-544 threads the bilayer; the sequence is QVWIMTFASYFVVSVAIWIIA. At 545–600 the chain is on the cytoplasmic side; it reads KISPYEQFERDEDNGQYKPVDNQFSLRNSFWFTVCSLMQQGSELCPRAASTRLLTG. The chain crosses the membrane as a helical span at residues 601 to 621; that stretch reads IWWFFALILISSYTANLAAVL. Residues 622-780 lie on the Extracellular side of the membrane; the sequence is TTRRMETPIE…KRKDQDDGES (159 aa). Residue 651-652 participates in L-glutamate binding; the sequence is ST. Asn-657 is a glycosylation site (N-linked (GlcNAc...) asparagine). Glu-699 contributes to the L-glutamate binding site. A helical transmembrane segment spans residues 781–801; it reads IGGIFIILVVGLVLTAVLVIF. The Cytoplasmic segment spans residues 802–836; that stretch reads ELITTRKPSPAQSQVIRHVNVIPSFKLGFFRWNVN.

It belongs to the glutamate-gated ion channel (TC 1.A.10.1) family. Expressed in the intestine and in the ASER neuron. Also expressed in the thermosensitive RIA interneuron.

It is found in the cell membrane. Its subcellular location is the postsynaptic cell membrane. With respect to regulation, activated by low temperature of 18 degrees Celsius in ASER neuron. In terms of biological role, ionotropic glutamate receptor. Activation by glutamate requires additional verification. L-glutamate acts as an excitatory neurotransmitter at many synapses in the central nervous system. Binding of the excitatory neurotransmitter L-glutamate induces a conformation change, leading to the opening of the cation channel, and thereby converts the chemical signal to an electrical impulse. The receptor then desensitizes rapidly and enters a transient inactive state, characterized by the presence of bound agonist. Its function is as follows. Independent of its ionotropic glutamate receptor activity, acts as a thermoreceptor in the ASER neuron where it triggers a calcium response to activate cold avoidance behavior in response to temperatures below 19 degrees Celsius. Possibly functions as a metabotropic cold receptor and acts upstream of the G(o) G protein goa-1 in the ASER neuron. Also functions in cold sensing in the intestine. This Caenorhabditis elegans protein is Glutamate receptor ionotropic, kainate glr-3.